We begin with the raw amino-acid sequence, 281 residues long: Bis(5'-nucleosyl)-tetraphosphatase, symmetrical (281 aa).

It belongs to the Ap4A hydrolase family.

It carries out the reaction P(1),P(4)-bis(5'-adenosyl) tetraphosphate + H2O = 2 ADP + 2 H(+). Functionally, hydrolyzes diadenosine 5',5'''-P1,P4-tetraphosphate to yield ADP. The sequence is that of Bis(5'-nucleosyl)-tetraphosphatase, symmetrical from Pectobacterium atrosepticum (strain SCRI 1043 / ATCC BAA-672) (Erwinia carotovora subsp. atroseptica).